Reading from the N-terminus, the 189-residue chain is UPF0301 protein PP_4995 (189 aa).

Belongs to the UPF0301 (AlgH) family.

The polypeptide is UPF0301 protein PP_4995 (Pseudomonas putida (strain ATCC 47054 / DSM 6125 / CFBP 8728 / NCIMB 11950 / KT2440)).